The primary structure comprises 224 residues: Cytidylate kinase (224 aa).

11-19 (GPAAAGKST) contributes to the ATP binding site.

Belongs to the cytidylate kinase family. Type 1 subfamily.

The protein resides in the cytoplasm. The enzyme catalyses CMP + ATP = CDP + ADP. It catalyses the reaction dCMP + ATP = dCDP + ADP. The sequence is that of Cytidylate kinase from Listeria monocytogenes serovar 1/2a (strain ATCC BAA-679 / EGD-e).